Here is a 130-residue protein sequence, read N- to C-terminus: MWNEFKAFAMRGNIVDLAIGVVIGGAFGKIVTSLVNDIIMPLVGLLLGGLDFSGLSFTFGDAVVKYGSFIQTIVNFLIISFSIFIVIRTLNGLRRKKEAEEEAAEEAVDAQEELLKEIRDLLKQQAKSPE.

The Cytoplasmic portion of the chain corresponds to 1-14 (MWNEFKAFAMRGNI). A helical membrane pass occupies residues 15–43 (VDLAIGVVIGGAFGKIVTSLVNDIIMPLV). Topologically, residues 44 to 65 (GLLLGGLDFSGLSFTFGDAVVK) are extracellular. The helical transmembrane segment at 66–85 (YGSFIQTIVNFLIISFSIFI) threads the bilayer. Residues 86-130 (VIRTLNGLRRKKEAEEEAAEEAVDAQEELLKEIRDLLKQQAKSPE) are Cytoplasmic-facing.

It belongs to the MscL family. Homopentamer.

It localises to the cell membrane. Channel that opens in response to stretch forces in the membrane lipid bilayer. Forms a nonselective ion channel with a conductance of about 4 nanosiemens. May participate in the regulation of osmotic pressure changes within the cell. This is Large-conductance mechanosensitive channel from Bacillus subtilis (strain 168).